The primary structure comprises 179 residues: Large ribosomal subunit protein uL5 (179 aa).

This sequence belongs to the universal ribosomal protein uL5 family. As to quaternary structure, part of the 50S ribosomal subunit; part of the 5S rRNA/L5/L18/L25 subcomplex. Contacts the 5S rRNA and the P site tRNA. Forms a bridge to the 30S subunit in the 70S ribosome.

Its function is as follows. This is one of the proteins that bind and probably mediate the attachment of the 5S RNA into the large ribosomal subunit, where it forms part of the central protuberance. In the 70S ribosome it contacts protein S13 of the 30S subunit (bridge B1b), connecting the 2 subunits; this bridge is implicated in subunit movement. Contacts the P site tRNA; the 5S rRNA and some of its associated proteins might help stabilize positioning of ribosome-bound tRNAs. The chain is Large ribosomal subunit protein uL5 from Geotalea uraniireducens (strain Rf4) (Geobacter uraniireducens).